The sequence spans 1066 residues: DNA primase (1066 aa).

The tract at residues 694–727 is disordered; sequence DGPSAGGDDGDGDWFPDAGGPGDEEWEEDTDPMD. Residues 715–725 are compositionally biased toward acidic residues; that stretch reads GDEEWEEDTDP. A CHC2-type zinc finger spans residues 995-1035; sequence CLRFKHGRASRATARTFLALSVGTNNRLCASLCQQCFATKC.

It belongs to the herpesviridae DNA primase family. Associates with the helicase and the primase-associated factor to form the helicase-primase factor.

It is found in the host nucleus. Its function is as follows. Essential component of the helicase/primase complex. Unwinds the DNA at the replication forks and generates single-stranded DNA for both leading and lagging strand synthesis. The primase initiates primer synthesis and thereby produces large amount of short RNA primers on the lagging strand that the polymerase elongates using dNTPs. The sequence is that of DNA primase from Human herpesvirus 2 (strain HG52) (HHV-2).